Here is a 154-residue protein sequence, read N- to C-terminus: uncharacterized protein (154 aa).

A mitochondrion-targeting transit peptide spans 1 to 42; that stretch reads MLRVIWKHSSRVTRSIELSNISTTNHTRSLRRLSWISPRRFY.

It localises to the mitochondrion. This is an uncharacterized protein from Saccharomyces cerevisiae (strain ATCC 204508 / S288c) (Baker's yeast).